The following is a 572-amino-acid chain: Arginine--tRNA ligase (572 aa).

The 'HIGH' region motif lies at 122–132; it reads PNLAKEMHVGH.

Belongs to the class-I aminoacyl-tRNA synthetase family. In terms of assembly, monomer.

It is found in the cytoplasm. It catalyses the reaction tRNA(Arg) + L-arginine + ATP = L-arginyl-tRNA(Arg) + AMP + diphosphate. This is Arginine--tRNA ligase from Neisseria gonorrhoeae (strain ATCC 700825 / FA 1090).